A 949-amino-acid chain; its full sequence is MAM domain-containing glycosylphosphatidylinositol anchor protein 2 (949 aa).

The first 25 residues, 1–25, serve as a signal peptide directing secretion; it reads MDLVYGLVWLLTVLLEGISGQGVYA. 2 Ig-like domains span residues 27–127 and 134–232; these read PTVR…IRVD and PVVT…KMVS. 2 disulfide bridges follow: C62/C110 and C159/C216. N92, N213, and N237 each carry an N-linked (GlcNAc...) asparagine glycan. 4 consecutive Ig-like domains span residues 242–328, 340–436, 442–533, and 540–627; these read PSIK…NIIV, PDPY…VNIS, PNLT…ALVQ, and PAVE…FLVT. Intrachain disulfides connect C264–C310 and C359–C417. N434, N443, N504, N610, and N703 each carry an N-linked (GlcNAc...) asparagine glycan. 2 disulfide bridges follow: C465-C515 and C561-C611. The Fibronectin type-III domain occupies 638–738; sequence DTYNPVWQNR…TIRVIKYTGE (101 aa). In terms of domain architecture, MAM spans 739 to 914; it reads FHCGFEDGNI…VSIAEGECAK (176 aa). A lipid anchor (GPI-anchor amidated aspartate) is attached at D924. A propeptide spans 925–949 (removed in mature form); that stretch reads GAVGILVHIWLFPVIILISILSPRR.

In terms of assembly, interacts (through the Ig-like domains) with NLGN2. Expressed predominantly in neuronal tissue. Expressed in brain.

It is found in the cell membrane. Its function is as follows. May be involved in cell-cell interactions. In Rattus norvegicus (Rat), this protein is MAM domain-containing glycosylphosphatidylinositol anchor protein 2 (Mdga2).